Consider the following 311-residue polypeptide: HPr kinase/phosphorylase (311 aa).

Residues H140 and K161 contribute to the active site. 155 to 162 (GDSGIGKS) lines the ATP pocket. S162 provides a ligand contact to Mg(2+). D179 serves as the catalytic Proton acceptor; for phosphorylation activity. Proton donor; for dephosphorylation activity. Residues 203-212 (IEIRGIGIID) form an important for the catalytic mechanism of both phosphorylation and dephosphorylation region. Position 204 (E204) interacts with Mg(2+). R245 is an active-site residue. The important for the catalytic mechanism of dephosphorylation stretch occupies residues 266–271 (PVKTGR).

It belongs to the HPrK/P family. As to quaternary structure, homohexamer. Mg(2+) serves as cofactor.

The enzyme catalyses [HPr protein]-L-serine + ATP = [HPr protein]-O-phospho-L-serine + ADP + H(+). The catalysed reaction is [HPr protein]-O-phospho-L-serine + phosphate + H(+) = [HPr protein]-L-serine + diphosphate. Catalyzes the ATP- as well as the pyrophosphate-dependent phosphorylation of a specific serine residue in HPr, a phosphocarrier protein of the phosphoenolpyruvate-dependent sugar phosphotransferase system (PTS). HprK/P also catalyzes the pyrophosphate-producing, inorganic phosphate-dependent dephosphorylation (phosphorolysis) of seryl-phosphorylated HPr (P-Ser-HPr). The two antagonistic activities of HprK/P are regulated by several intracellular metabolites, which change their concentration in response to the absence or presence of rapidly metabolisable carbon sources (glucose, fructose, etc.) in the growth medium. Therefore, by controlling the phosphorylation state of HPr, HPrK/P is a sensor enzyme that plays a major role in the regulation of carbon metabolism and sugar transport: it mediates carbon catabolite repression (CCR), and regulates PTS-catalyzed carbohydrate uptake and inducer exclusion. This chain is HPr kinase/phosphorylase (hprK), found in Enterococcus faecalis (strain ATCC 700802 / V583).